Consider the following 167-residue polypeptide: GTP-dependent dephospho-CoA kinase (167 aa).

The GTP site is built by D39, V41, D58, K60, and E117.

This sequence belongs to the GTP-dependent DPCK family.

It catalyses the reaction 3'-dephospho-CoA + GTP = GDP + CoA + H(+). The protein operates within cofactor biosynthesis; coenzyme A biosynthesis. Its function is as follows. Catalyzes the GTP-dependent phosphorylation of the 3'-hydroxyl group of dephosphocoenzyme A to form coenzyme A (CoA). In Korarchaeum cryptofilum (strain OPF8), this protein is GTP-dependent dephospho-CoA kinase.